We begin with the raw amino-acid sequence, 226 residues long: DNA mismatch repair protein MutH (226 aa).

This sequence belongs to the MutH family.

Its subcellular location is the cytoplasm. In terms of biological role, sequence-specific endonuclease that cleaves unmethylated GATC sequences. It is involved in DNA mismatch repair. This chain is DNA mismatch repair protein MutH, found in Vibrio parahaemolyticus serotype O3:K6 (strain RIMD 2210633).